The sequence spans 489 residues: Betaine aldehyde dehydrogenase (489 aa).

K(+) is bound by residues Thr26 and Asp93. 150-152 (GAW) is an NAD(+) binding site. Lys162 serves as the catalytic Charge relay system. NAD(+) is bound at residue 176 to 179 (KPSE). Position 180 (Val180) interacts with K(+). 229-232 (GVET) contacts NAD(+). Leu245 is a binding site for K(+). Catalysis depends on Glu251, which acts as the Proton acceptor. Positions 253, 285, and 386 each coordinate NAD(+). Cys285 functions as the Nucleophile in the catalytic mechanism. Cys285 bears the Cysteine sulfenic acid (-SOH) mark. The K(+) site is built by Lys456 and Gly459. The active-site Charge relay system is Glu463.

Belongs to the aldehyde dehydrogenase family. Dimer of dimers. K(+) is required as a cofactor.

It catalyses the reaction betaine aldehyde + NAD(+) + H2O = glycine betaine + NADH + 2 H(+). It functions in the pathway amine and polyamine biosynthesis; betaine biosynthesis via choline pathway; betaine from betaine aldehyde: step 1/1. Functionally, involved in the biosynthesis of the osmoprotectant glycine betaine. Catalyzes the irreversible oxidation of betaine aldehyde to the corresponding acid. The protein is Betaine aldehyde dehydrogenase of Burkholderia ambifaria (strain ATCC BAA-244 / DSM 16087 / CCUG 44356 / LMG 19182 / AMMD) (Burkholderia cepacia (strain AMMD)).